The sequence spans 495 residues: MAAAEAQYDLLVIGGGSGGLACSKRAASHGKKVAVCDFVKPSPPGTTWGLGGTCVNVGCIPKKLMHQAALLGEGMTDAESFGWEVAAPKHNWETMVGNVQGHIKSLNFGYRSDLMSNGVKYYNAYATFLDPHTVEAVDKKGKVTKITASEIVICTGGRPRYPDIPGAKELGITSDDVFALKSPPGRTLVVGASYVALECAGFIKGVGYDTTVMMRSIPLRGFDQQMAGLCKTYMQEHGVAFIEGAVPTAVEATPSGAKKVSWKLADGSVGSGEYDTVLFAIGRDVCTSAIGIDKAGVKLSSNGKVPTVNEQTNVPHIYAIGDIIDGEALNPPSATTELTPVAIQAGKLLADRLYAGKSALMDYSMVATTVYTPLEYGAVGLPEEEAIKLHGEDNIEVYHSYFKPLEWTLPHRGDNVCYAKLICLKPEGERVIGLHVCGPNAGEMTQGFAVAIKAGATKAHFDDTVGIHPTVAEEFTLLAATKRSGDSAEKSGCUG.

An FAD-binding site is contributed by 37–54; sequence DFVKPSPPGTTWGLGGTC. Residues C54 and C59 are joined by a disulfide bond. The active-site Proton acceptor is H468. The cysteinyl-selenocysteine (Cys-Sec) cross-link spans 493 to 494; the sequence is CU. U494 is a non-standard amino acid (selenocysteine).

Belongs to the class-I pyridine nucleotide-disulfide oxidoreductase family. In terms of assembly, homodimer. It depends on FAD as a cofactor. Post-translationally, the N-terminus is blocked.

The enzyme catalyses [thioredoxin]-dithiol + NADP(+) = [thioredoxin]-disulfide + NADPH + H(+). With respect to regulation, activity was very low in selenium-depleted cells, but increased 4-fold to the same level as in selenium-sufficient cells for 70 hours after the addition of 10 nm selenite. This Emiliania huxleyi (Coccolithophore) protein is Thioredoxin reductase SEP1 (SEP1).